The primary structure comprises 391 residues: Heme A synthase (391 aa).

8 helical membrane-spanning segments follow: residues Ile37–Leu57, Arg121–Ala141, Leu152–Ser172, Leu186–Leu206, Thr229–Ile249, Phe298–Gly318, Leu332–Ala352, and Trp354–Ala374. His300 is a heme binding site. His360 lines the heme pocket.

It belongs to the COX15/CtaA family. Type 2 subfamily. In terms of assembly, interacts with CtaB. Heme b is required as a cofactor.

The protein resides in the cell membrane. The enzyme catalyses Fe(II)-heme o + 2 A + H2O = Fe(II)-heme a + 2 AH2. Its pathway is porphyrin-containing compound metabolism; heme A biosynthesis; heme A from heme O: step 1/1. Catalyzes the conversion of heme O to heme A by two successive hydroxylations of the methyl group at C8. The first hydroxylation forms heme I, the second hydroxylation results in an unstable dihydroxymethyl group, which spontaneously dehydrates, resulting in the formyl group of heme A. This is Heme A synthase from Cereibacter sphaeroides (strain ATCC 17029 / ATH 2.4.9) (Rhodobacter sphaeroides).